A 257-amino-acid chain; its full sequence is Ribonuclease HIII (257 aa).

An RNase H type-2 domain is found at 71–257 (KKLPGCDESG…ERFIKLNFNV (187 aa)). A divalent metal cation is bound by residues D77, E78, and D179.

Belongs to the RNase HII family. RnhC subfamily. The cofactor is Mn(2+). It depends on Mg(2+) as a cofactor.

It is found in the cytoplasm. It carries out the reaction Endonucleolytic cleavage to 5'-phosphomonoester.. Functionally, endonuclease that specifically degrades the RNA of RNA-DNA hybrids. The polypeptide is Ribonuclease HIII (rnhC) (Aquifex aeolicus (strain VF5)).